The following is an 86-amino-acid chain: Small ribosomal subunit protein uS17 (86 aa).

It belongs to the universal ribosomal protein uS17 family. Part of the 30S ribosomal subunit.

Its function is as follows. One of the primary rRNA binding proteins, it binds specifically to the 5'-end of 16S ribosomal RNA. This chain is Small ribosomal subunit protein uS17, found in Caldicellulosiruptor saccharolyticus (strain ATCC 43494 / DSM 8903 / Tp8T 6331).